Here is a 330-residue protein sequence, read N- to C-terminus: GTPase Obg (330 aa).

An Obg domain is found at 1–159 (MHFIDEVKIY…MWIHLSLKLL (159 aa)). In terms of domain architecture, OBG-type G spans 160-327 (SDVGLVGLPN…IVKLALETIK (168 aa)). GTP is bound by residues 166–173 (GLPNAGKS), 191–195 (FTTLV), 212–215 (DIPG), 279–282 (NKCD), and 308–310 (STC). 2 residues coordinate Mg(2+): Ser-173 and Thr-193.

This sequence belongs to the TRAFAC class OBG-HflX-like GTPase superfamily. OBG GTPase family. In terms of assembly, monomer. Mg(2+) is required as a cofactor.

It localises to the cytoplasm. An essential GTPase which binds GTP, GDP and possibly (p)ppGpp with moderate affinity, with high nucleotide exchange rates and a fairly low GTP hydrolysis rate. Plays a role in control of the cell cycle, stress response, ribosome biogenesis and in those bacteria that undergo differentiation, in morphogenesis control. This is GTPase Obg from Rickettsia rickettsii (strain Iowa).